The chain runs to 92 residues: Protein S100-B (92 aa).

Position 2 is an N-acetylserine (serine 2). EF-hand domains follow at residues 13-48 (DVFH…LEEI) and 49-84 (KEQE…VTTA). Zn(2+) is bound at residue histidine 16. Ca(2+) is bound by residues serine 19, glutamate 22, and aspartate 24. Histidine 26 lines the Zn(2+) pocket. The Ca(2+) site is built by aspartate 62, aspartate 64, aspartate 66, glutamate 68, and glutamate 73. The Zn(2+) site is built by histidine 86 and histidine 91.

It belongs to the S-100 family. As to quaternary structure, dimer of either two alpha chains, or two beta chains, or one alpha and one beta chain. The S100B dimer binds two molecules of STK38. Interacts with CACYBP in a calcium-dependent manner. Interacts with ATAD3A; this interaction probably occurs in the cytosol prior to ATAD3A mitochondrial targeting. Interacts with S100A6. The S100B dimer interacts with two molecules of CAPZA1. Interacts with AGER. Interacts with PPP5C (via TPR repeats); the interaction is calcium-dependent and modulates PPP5C activity. Interacts with TPPP; this interaction inhibits TPPP dimerization. Interacts with isoform CLSTN3beta of CLSTN3; interaction promotes secretion.

It is found in the cytoplasm. It localises to the nucleus. Its subcellular location is the secreted. Functionally, small zinc- and- and calcium-binding protein that is highly expressed in astrocytes and constitutes one of the most abundant soluble proteins in brain. Weakly binds calcium but binds zinc very tightly-distinct binding sites with different affinities exist for both ions on each monomer. Physiological concentrations of potassium ion antagonize the binding of both divalent cations, especially affecting high-affinity calcium-binding sites. Acts as a neurotrophic factor that promotes astrocytosis and axonal proliferation. Involved in innervation of thermogenic adipose tissue by acting as an adipocyte-derived neurotrophic factor that promotes sympathetic innervation of adipose tissue. Binds to and initiates the activation of STK38 by releasing autoinhibitory intramolecular interactions within the kinase. Interaction with AGER after myocardial infarction may play a role in myocyte apoptosis by activating ERK1/2 and p53/TP53 signaling. Could assist ATAD3A cytoplasmic processing, preventing aggregation and favoring mitochondrial localization. May mediate calcium-dependent regulation on many physiological processes by interacting with other proteins, such as TPR-containing proteins, and modulating their activity. This chain is Protein S100-B, found in Mus musculus (Mouse).